The primary structure comprises 737 residues: Transcription activator MSS11 (737 aa).

Residues 1 to 23 (MDNTTNINTNERSSNTDFSSAPN) form a disordered region. One can recognise a LisH domain in the interval 51–83 (SKQLLYAHIYNYLIKNNYWNSAAKFLSEADLPL). 4 disordered regions span residues 191 to 220 (TQNSFPVSEESFRPNGDGSNFNLNDPTNRN), 268 to 347 (LQSP…PTNQ), 413 to 439 (GNQNYQSNTRNNTAEETTPTNDNNANG), and 572 to 660 (KTNT…TKES). Over residues 207–220 (DGSNFNLNDPTNRN) the composition is skewed to polar residues. Residues 269-314 (QSPAQPQQSSQQQIQQPQRQPQHQQQQQQQQQQQQQQQQQQQQQQQ) are compositionally biased toward low complexity. 3 stretches are compositionally biased toward polar residues: residues 330–347 (SENSHSTGLMPSVPPTNQ), 421–439 (TRNNTAEETTPTNDNNANG), and 572–585 (KTNTSVPQNDSTSV). The segment covering 590–643 (NNNNNNNNNNNNNNNSNNSNNNNNNNNSNNTPTVSQPSSKRTSSSSTTPNITTT) has biased composition (low complexity). Positions 646 to 655 (PKRKQRVGKT) are enriched in basic residues.

This sequence belongs to the MSS11 family. In terms of assembly, interacts with FLO8, STE12 and TEC1.

The protein localises to the cytoplasm. It localises to the nucleus. Its function is as follows. Transcription factor that regulates pseudohyphal differentiation, invasive growth, floculation, adhesion and starch metabolism in response to nutrient availability. This Saccharomyces cerevisiae (strain YJM789) (Baker's yeast) protein is Transcription activator MSS11 (MSS11).